Reading from the N-terminus, the 355-residue chain is 3-dehydroquinate synthase (355 aa).

Residues 71–76, 105–109, 129–130, Lys142, and Lys151 contribute to the NAD(+) site; these read EGEASK, GVVGD, and TS. Zn(2+)-binding residues include Glu184, His246, and His263.

It belongs to the sugar phosphate cyclases superfamily. Dehydroquinate synthase family. Co(2+) is required as a cofactor. Zn(2+) serves as cofactor. Requires NAD(+) as cofactor.

The protein localises to the cytoplasm. It catalyses the reaction 7-phospho-2-dehydro-3-deoxy-D-arabino-heptonate = 3-dehydroquinate + phosphate. The protein operates within metabolic intermediate biosynthesis; chorismate biosynthesis; chorismate from D-erythrose 4-phosphate and phosphoenolpyruvate: step 2/7. Catalyzes the conversion of 3-deoxy-D-arabino-heptulosonate 7-phosphate (DAHP) to dehydroquinate (DHQ). The protein is 3-dehydroquinate synthase of Streptococcus gordonii (strain Challis / ATCC 35105 / BCRC 15272 / CH1 / DL1 / V288).